The sequence spans 161 residues: UPF0225 protein GSU1048 (161 aa).

The protein belongs to the UPF0225 family.

The protein is UPF0225 protein GSU1048 of Geobacter sulfurreducens (strain ATCC 51573 / DSM 12127 / PCA).